The following is a 165-amino-acid chain: Type 3 secretion system regulator YopR (165 aa).

The interval 2-11 is 5' secretion signal; sequence TVTLNRGSIT. Residues 131-149 form a 3' secretion signal region; sequence PYLSELINKELMILLPYNS.

It belongs to the YopR family.

It is found in the secreted. In terms of biological role, may be involved in the regulation of the assembly of the type III secretion system (T3SS), also called injectisome, which is used to inject bacterial effector proteins into eukaryotic host cells. May control the secretion and/or polymerization of YscF/SctF, the principal component of the needle filament, thereby impacting the assembly of the T3SS. Involved in pathogenesis. Essential for the establishment of Yersinia infections in a mouse model system. The protein is Type 3 secretion system regulator YopR of Yersinia enterocolitica.